The primary structure comprises 287 residues: Sulfofructosephosphate aldolase (287 aa).

D82 serves as the catalytic Proton donor. Zn(2+) contacts are provided by H83 and H180. G181 is a dihydroxyacetone phosphate binding site. A Zn(2+)-binding site is contributed by H208. Residues 209-211 (GGS) and 230-233 (NVDT) contribute to the dihydroxyacetone phosphate site.

This sequence belongs to the class II fructose-bisphosphate aldolase family. It depends on Zn(2+) as a cofactor.

It carries out the reaction 6-deoxy-6-sulfo-D-fructose 1-phosphate = (2S)-3-sulfolactaldehyde + dihydroxyacetone phosphate. Functionally, part of the sulfo-EMP2 pathway, a D-sulfoquinovose degradation pathway that produces sulfolactate (SL). Cleaves 6-deoxy-6-sulfo-D-fructose 1-phosphate (SFP) to form dihydroxyacetone phosphate (DHAP) and 3-sulfolactaldehyde (SLA). This is Sulfofructosephosphate aldolase from Alkalicoccus urumqiensis (Bacillus urumqiensis).